A 583-amino-acid polypeptide reads, in one-letter code: CTP synthase (583 aa).

Residues 1–278 (MRRHPQTATK…DAFVVRRLNL (278 aa)) are amidoligase domain. Ser-20 contributes to the CTP binding site. Residue Ser-20 participates in UTP binding. ATP is bound by residues 21–26 (SLGKGL) and Asp-78. The Mg(2+) site is built by Asp-78 and Glu-152. Residues 159 to 161 (DIE), 199 to 204 (KTKPTQ), and Lys-235 each bind CTP. UTP contacts are provided by residues 199-204 (KTKPTQ) and Lys-235. The 249-residue stretch at 303–551 (RIALVGKYVE…VKAAIDYKEG (249 aa)) folds into the Glutamine amidotransferase type-1 domain. Gly-366 serves as a coordination point for L-glutamine. Residue Cys-393 is the Nucleophile; for glutamine hydrolysis of the active site. Residues 394 to 397 (LGLQ), Glu-416, and Arg-477 each bind L-glutamine. Active-site residues include His-524 and Glu-526. Residues 559–583 (PERVSNGAERRDQVGQSIPEPANRG) form a disordered region.

The protein belongs to the CTP synthase family. In terms of assembly, homotetramer.

It carries out the reaction UTP + L-glutamine + ATP + H2O = CTP + L-glutamate + ADP + phosphate + 2 H(+). The catalysed reaction is L-glutamine + H2O = L-glutamate + NH4(+). It catalyses the reaction UTP + NH4(+) + ATP = CTP + ADP + phosphate + 2 H(+). It participates in pyrimidine metabolism; CTP biosynthesis via de novo pathway; CTP from UDP: step 2/2. Allosterically activated by GTP, when glutamine is the substrate; GTP has no effect on the reaction when ammonia is the substrate. The allosteric effector GTP functions by stabilizing the protein conformation that binds the tetrahedral intermediate(s) formed during glutamine hydrolysis. Inhibited by the product CTP, via allosteric rather than competitive inhibition. Catalyzes the ATP-dependent amination of UTP to CTP with either L-glutamine or ammonia as the source of nitrogen. Regulates intracellular CTP levels through interactions with the four ribonucleotide triphosphates. The sequence is that of CTP synthase from Mycobacterium ulcerans (strain Agy99).